Consider the following 81-residue polypeptide: Large ribosomal subunit protein bL27 (81 aa).

Positions 1–22 (MAHKKGQGSSRNGRDSNAQRRG) are disordered.

Belongs to the bacterial ribosomal protein bL27 family.

The sequence is that of Large ribosomal subunit protein bL27 from Rhodopirellula baltica (strain DSM 10527 / NCIMB 13988 / SH1).